A 303-amino-acid chain; its full sequence is Pyridoxal 5'-phosphate synthase subunit PdxS (303 aa).

Residue Asp33 coordinates D-ribose 5-phosphate. Lys90 functions as the Schiff-base intermediate with D-ribose 5-phosphate in the catalytic mechanism. Gly162 contacts D-ribose 5-phosphate. Arg174 is a D-glyceraldehyde 3-phosphate binding site. D-ribose 5-phosphate-binding positions include Gly223 and 244–245 (GS).

The protein belongs to the PdxS/SNZ family. As to quaternary structure, in the presence of PdxT, forms a dodecamer of heterodimers.

The enzyme catalyses aldehydo-D-ribose 5-phosphate + D-glyceraldehyde 3-phosphate + L-glutamine = pyridoxal 5'-phosphate + L-glutamate + phosphate + 3 H2O + H(+). It participates in cofactor biosynthesis; pyridoxal 5'-phosphate biosynthesis. In terms of biological role, catalyzes the formation of pyridoxal 5'-phosphate from ribose 5-phosphate (RBP), glyceraldehyde 3-phosphate (G3P) and ammonia. The ammonia is provided by the PdxT subunit. Can also use ribulose 5-phosphate and dihydroxyacetone phosphate as substrates, resulting from enzyme-catalyzed isomerization of RBP and G3P, respectively. This chain is Pyridoxal 5'-phosphate synthase subunit PdxS, found in Mycolicibacterium smegmatis (strain ATCC 700084 / mc(2)155) (Mycobacterium smegmatis).